A 91-amino-acid chain; its full sequence is MGLQEEFEEFAEKAKTLPDTISNEDKLLLYGLYKQATVGPVTTGRPGIFNLKDRYKWDAWKAVEGKSKEEAMADYITKVKQLLEEASASTS.

The ACB domain occupies L3–A88. Residues K15, Y30 to K34, K52, K56, and Y75 each bind an acyl-CoA.

It belongs to the ACBP family. In terms of tissue distribution, highly expressed in leaves. Expressed at low levels in roots and seeds.

The protein resides in the cytoplasm. Its subcellular location is the cytosol. In terms of biological role, binds medium- and long-chain acyl-CoA esters with high affinity. Can interact in vitro with linolenoyl-CoA. Binds palmitoyl-CoA and linoleoyl-CoA in vitro. Binds phosphatidic acid (PA) and phosphatidylcholine (PC) in vitro. May play a role in the biosynthesis of phospholipids. The sequence is that of Acyl-CoA-binding domain-containing protein 2 from Oryza sativa subsp. japonica (Rice).